The primary structure comprises 128 residues: Large ribosomal subunit protein bL17 (128 aa).

Belongs to the bacterial ribosomal protein bL17 family. As to quaternary structure, part of the 50S ribosomal subunit. Contacts protein L32.

The chain is Large ribosomal subunit protein bL17 from Pseudomonas fluorescens (strain ATCC BAA-477 / NRRL B-23932 / Pf-5).